The sequence spans 97 residues: Putative membrane protein insertion efficiency factor (97 aa).

It belongs to the UPF0161 family.

It is found in the cell membrane. In terms of biological role, could be involved in insertion of integral membrane proteins into the membrane. The protein is Putative membrane protein insertion efficiency factor of Lactobacillus johnsonii (strain CNCM I-12250 / La1 / NCC 533).